A 380-amino-acid polypeptide reads, in one-letter code: Queuine tRNA-ribosyltransferase (380 aa).

The Proton acceptor role is filled by Asp95. Substrate-binding positions include 95-99 (DSGGF), Asp149, Gln192, and Gly219. The tract at residues 250 to 256 (GVGSPDA) is RNA binding. Asp269 (nucleophile) is an active-site residue. The tract at residues 274 to 278 (TRIAR) is RNA binding; important for wobble base 34 recognition. Residues Cys307, Cys309, Cys312, and His338 each coordinate Zn(2+).

It belongs to the queuine tRNA-ribosyltransferase family. Homodimer. Within each dimer, one monomer is responsible for RNA recognition and catalysis, while the other monomer binds to the replacement base PreQ1. It depends on Zn(2+) as a cofactor.

It carries out the reaction 7-aminomethyl-7-carbaguanine + guanosine(34) in tRNA = 7-aminomethyl-7-carbaguanosine(34) in tRNA + guanine. Its pathway is tRNA modification; tRNA-queuosine biosynthesis. Its function is as follows. Catalyzes the base-exchange of a guanine (G) residue with the queuine precursor 7-aminomethyl-7-deazaguanine (PreQ1) at position 34 (anticodon wobble position) in tRNAs with GU(N) anticodons (tRNA-Asp, -Asn, -His and -Tyr). Catalysis occurs through a double-displacement mechanism. The nucleophile active site attacks the C1' of nucleotide 34 to detach the guanine base from the RNA, forming a covalent enzyme-RNA intermediate. The proton acceptor active site deprotonates the incoming PreQ1, allowing a nucleophilic attack on the C1' of the ribose to form the product. After dissociation, two additional enzymatic reactions on the tRNA convert PreQ1 to queuine (Q), resulting in the hypermodified nucleoside queuosine (7-(((4,5-cis-dihydroxy-2-cyclopenten-1-yl)amino)methyl)-7-deazaguanosine). This is Queuine tRNA-ribosyltransferase from Latilactobacillus sakei subsp. sakei (strain 23K) (Lactobacillus sakei subsp. sakei).